The sequence spans 240 residues: DUP240 protein DFP1 (240 aa).

The interval 1–29 is disordered; the sequence is MQPYLKKNTHATDDPKASPLKEGSPDNPE. Transmembrane regions (helical) follow at residues 61 to 81 and 84 to 104; these read IMIN…DIWF and VLSP…VLQI.

This sequence belongs to the DUP/COS family.

The protein localises to the membrane. This is DUP240 protein DFP1 from Saccharomyces cerevisiae (Baker's yeast).